The following is a 265-amino-acid chain: NAD kinase (265 aa).

Residue aspartate 45 is the Proton acceptor of the active site. Residues 45–46, 122–123, arginine 148, aspartate 150, 161–166, and alanine 185 each bind NAD(+); these read DG, NE, and TAYSKS.

The protein belongs to the NAD kinase family. It depends on a divalent metal cation as a cofactor.

The protein localises to the cytoplasm. It catalyses the reaction NAD(+) + ATP = ADP + NADP(+) + H(+). Functionally, involved in the regulation of the intracellular balance of NAD and NADP, and is a key enzyme in the biosynthesis of NADP. Catalyzes specifically the phosphorylation on 2'-hydroxyl of the adenosine moiety of NAD to yield NADP. This Lactobacillus delbrueckii subsp. bulgaricus (strain ATCC 11842 / DSM 20081 / BCRC 10696 / JCM 1002 / NBRC 13953 / NCIMB 11778 / NCTC 12712 / WDCM 00102 / Lb 14) protein is NAD kinase.